A 547-amino-acid chain; its full sequence is Chaperonin GroEL (547 aa).

ATP contacts are provided by residues 30–33 (TLGP), Lys51, 87–91 (DGTTT), Gly415, and Asp496. A disordered region spans residues 528 to 547 (KEEPMPMRGSGMGGMGGMDF). Residues 537–547 (SGMGGMGGMDF) are compositionally biased toward gly residues.

Belongs to the chaperonin (HSP60) family. In terms of assembly, forms a cylinder of 14 subunits composed of two heptameric rings stacked back-to-back. Interacts with the co-chaperonin GroES.

The protein resides in the cytoplasm. The enzyme catalyses ATP + H2O + a folded polypeptide = ADP + phosphate + an unfolded polypeptide.. Together with its co-chaperonin GroES, plays an essential role in assisting protein folding. The GroEL-GroES system forms a nano-cage that allows encapsulation of the non-native substrate proteins and provides a physical environment optimized to promote and accelerate protein folding. In Rickettsia canadensis (strain McKiel), this protein is Chaperonin GroEL.